The sequence spans 170 residues: Single-stranded DNA-binding protein (170 aa).

Residues 1-26 form an oligomerization region; that stretch reads MSNELKQVEQTEEAVVVSETKDYIKV.

This sequence belongs to the phi29likevirus single-strand-binding protein family. As to quaternary structure, hexamer.

In terms of biological role, single-stranded DNA-binding protein required for the elongation during viral DNA replication by strand displacement. Displaced viral DNA strands are transiently coated with the ssDNA-binding protein and therefore protected againt nucleases. The latter is then probably removed by the replisome that performs lagging strand synthesis or during the events that lead up to the recombination process. Has helix-destabilizing activity since it removes secondary structure from the ssDNA in replicative intermediates. This chain is Single-stranded DNA-binding protein, found in Bacillus subtilis (Bacteriophage GA-1).